Here is a 324-residue protein sequence, read N- to C-terminus: D-alanine--D-alanine ligase (324 aa).

The region spanning 120–322 is the ATP-grasp domain; sequence NNYLRGFGVE…LKEILTEIIE (203 aa). 149 to 204 contributes to the ATP binding site; that stretch reads IDKLGLPLIVKPNDGGSSFGVTKVTNITQIQLAIRNAFNEGEGVLIESFIPGTEIT. 3 residues coordinate Mg(2+): D276, E289, and N291.

This sequence belongs to the D-alanine--D-alanine ligase family. It depends on Mg(2+) as a cofactor. Requires Mn(2+) as cofactor.

The protein resides in the cytoplasm. It catalyses the reaction 2 D-alanine + ATP = D-alanyl-D-alanine + ADP + phosphate + H(+). The protein operates within cell wall biogenesis; peptidoglycan biosynthesis. Cell wall formation. In Azobacteroides pseudotrichonymphae genomovar. CFP2, this protein is D-alanine--D-alanine ligase.